We begin with the raw amino-acid sequence, 63 residues long: Small ribosomal subunit protein bS21 (63 aa).

Belongs to the bacterial ribosomal protein bS21 family.

The protein is Small ribosomal subunit protein bS21 of Parabacteroides distasonis (strain ATCC 8503 / DSM 20701 / CIP 104284 / JCM 5825 / NCTC 11152).